The following is a 72-amino-acid chain: Putative membrane protein insertion efficiency factor (72 aa).

This sequence belongs to the UPF0161 family.

It is found in the cell inner membrane. In terms of biological role, could be involved in insertion of integral membrane proteins into the membrane. This is Putative membrane protein insertion efficiency factor from Amoebophilus asiaticus (strain 5a2).